The chain runs to 332 residues: Small ribosomal subunit protein uS2 (332 aa).

It belongs to the universal ribosomal protein uS2 family.

This is Small ribosomal subunit protein uS2 from Afipia carboxidovorans (strain ATCC 49405 / DSM 1227 / KCTC 32145 / OM5) (Oligotropha carboxidovorans).